A 181-amino-acid chain; its full sequence is MEFFDVKKMPVNLWRNGAGETREICCYPPSRDFNWRASIASLASNGEFNVVPQVDRVVTLLDGGEVTLLGGGAFRHTLKRHQPFTFAGEHPVRAELTDGRMSLDFNLMTRRDRCRAQVRVADRTFTTGRARGGIVYVLSGAWQLNDKLLTPEQGAWWQEGSHTLRLLKAEGQVLFSEITYL.

It belongs to the Ves family.

In Cronobacter sakazakii (strain ATCC BAA-894) (Enterobacter sakazakii), this protein is Protein Ves.